A 211-amino-acid polypeptide reads, in one-letter code: High mobility group protein B1-like 1 (211 aa).

N6-acetyllysine is present on residues K3, K7, K8, K12, K28, K29, and K30. The segment at residues 9–79 (PRGKMSSYAF…HYERQMKTYI (71 aa)) is a DNA-binding region (HMG box 1). Positions 71–96 (YERQMKTYIPPKGETKKKFKDPNAPK) are disordered. The segment covering 83–94 (GETKKKFKDPNA) has biased composition (basic and acidic residues). The HMG box 2 DNA-binding region spans 95–163 (PKRPPSAFFL…KYEKDIAAYQ (69 aa)). 10 positions are modified to N6-acetyllysine: K127, K128, K172, K173, K177, K180, K182, K183, K184, and K185. Residues 161 to 211 (AYQAKGKPEAAKKGVVKAEKSKKKKEEEEDEEDEEDEEEEDEEDEEDDDDE) form a disordered region. The span at 166 to 179 (GKPEAAKKGVVKAE) shows a compositional bias: basic and acidic residues. Acidic residues predominate over residues 187 to 211 (EEEDEEDEEDEEEEDEEDEEDDDDE).

It belongs to the HMGB family.

It localises to the nucleus. The protein resides in the chromosome. Binds preferentially single-stranded DNA and unwinds double-stranded DNA. This is High mobility group protein B1-like 1 (HMGB1P1) from Homo sapiens (Human).